We begin with the raw amino-acid sequence, 218 residues long: Guanylate kinase (218 aa).

In terms of domain architecture, Guanylate kinase-like spans 10-190 (GLLIILSSPS…TEERLKTIIT (181 aa)). 17–24 (SPSGAGKS) provides a ligand contact to ATP.

The protein belongs to the guanylate kinase family.

It is found in the cytoplasm. It catalyses the reaction GMP + ATP = GDP + ADP. In terms of biological role, essential for recycling GMP and indirectly, cGMP. The chain is Guanylate kinase from Jannaschia sp. (strain CCS1).